The sequence spans 609 residues: MMMNAFIEPAQHHLASYGLRMSPNTTASNSNAQQQQQQQLEMTQQQQQQQQQQQQQQQQDQESAAATAAAYQNSGYGHFNSYASRDFLLGRREAEYGVAGSAGQASAAADSMLFSGFPAQAAELGSGFGQHPFHSHHHHHQMRMGMADAYAAGHPYNHHGNFPTAAVHHPVVHHPSHHAMSAMHPAGAGAFLRYMRHQPASSASSVKQEMQCLWIDPDQPGLVPPGGRKTCNKVFHSMHEIVTHLTVEHVGGPECTTHACFWVGCSRNGRPFKAKYKLVNHIRVHTGEKPFACPHPGCGKVFARSENLKIHKRTHTGEKPFKCEHEGCDRRFANSSDRKKHSHVHTSDKPYNCRINGCDKSYTHPSSLRKHMKVHGNVDEKSPSHGYDSEGEESSSSSIITGGAQTPPSTRLDGSAGSSSGVSSLSGGSGIKSSPHSIKSEPNPMHSVHLGASSSGSSSTASSSASHLLQHQQHQHQQQQQQQQHQQQAQQQQQLTAHPSDPKSSPALQLMAASASAYLPPPLGPPPSHHHHPHHHQAAPSPGAAAASASMLHHNHHLLYHPAAQHHPPSDWYHTTAPSGSAEAMNPLNHFGHHHHHHHLMHPGAATAY.

Residues 20-41 (RMSPNTTASNSNAQQQQQQQLE) are disordered. Over residues 22 to 32 (SPNTTASNSNA) the composition is skewed to polar residues. The C2H2-type 1; atypical zinc-finger motif lies at 210–249 (MQCLWIDPDQPGLVPPGGRKTCNKVFHSMHEIVTHLTVEH). C2H2-type zinc fingers lie at residues 258–285 (HACF…IRVH), 291–315 (FACP…KRTH), 321–345 (FKCE…SHVH), and 351–375 (YNCR…MKVH). 2 disordered regions span residues 373 to 550 (KVHG…ASAS) and 583 to 609 (EAMN…ATAY). A compositionally biased stretch (polar residues) spans 399 to 409 (IITGGAQTPPS). 2 stretches are compositionally biased toward low complexity: residues 414-434 (GSAG…IKSS) and 449-498 (HLGA…LTAH). Basic residues predominate over residues 528 to 537 (SHHHHPHHHQ). The span at 538–550 (AAPSPGAAAASAS) shows a compositional bias: low complexity. The segment covering 591–601 (FGHHHHHHHLM) has biased composition (basic residues).

This sequence belongs to the GLI C2H2-type zinc-finger protein family. In terms of tissue distribution, expressed throughout all segment primordia; expressed ubiquitously in the ectoderm and mesoderm precursors.

Its subcellular location is the nucleus. In terms of biological role, transcription factor essential for parasegmental subdivision of the embryo. It is involved in the activation of wingless (wg) in odd parasegments. It is also required for the timely activation of wg in the remaining parasegments and for the timely activation of engrailed (en) in all parasegments. In Drosophila melanogaster (Fruit fly), this protein is Pair-rule protein odd-paired (opa).